Consider the following 315-residue polypeptide: Homoserine kinase (315 aa).

97–107 serves as a coordination point for ATP; the sequence is PPARGLGSSAT.

This sequence belongs to the GHMP kinase family. Homoserine kinase subfamily.

The protein localises to the cytoplasm. It carries out the reaction L-homoserine + ATP = O-phospho-L-homoserine + ADP + H(+). The protein operates within amino-acid biosynthesis; L-threonine biosynthesis; L-threonine from L-aspartate: step 4/5. Its function is as follows. Catalyzes the ATP-dependent phosphorylation of L-homoserine to L-homoserine phosphate. The chain is Homoserine kinase from Prochlorococcus marinus (strain MIT 9215).